The sequence spans 409 residues: Peptidase T (409 aa).

Residue His-78 participates in Zn(2+) binding. The active site involves Asp-80. Residue Asp-140 participates in Zn(2+) binding. Glu-173 (proton acceptor) is an active-site residue. Positions 174, 196, and 379 each coordinate Zn(2+).

The protein belongs to the peptidase M20B family. It depends on Zn(2+) as a cofactor.

Its subcellular location is the cytoplasm. It catalyses the reaction Release of the N-terminal residue from a tripeptide.. Functionally, cleaves the N-terminal amino acid of tripeptides. This is Peptidase T from Salmonella paratyphi C (strain RKS4594).